Reading from the N-terminus, the 1152-residue chain is Autotransporter adhesin BpaC (1152 aa).

The signal sequence occupies residues 1–71 (MNRIFKSIWC…PFAEEAMAAN (71 aa)). The interval 72-1061 (NAGVCLTYNG…VGQLNSAVSG (990 aa)) is surface exposed passenger domain. Disordered regions lie at residues 420 to 886 (GLQG…AGAT) and 900 to 949 (TATG…ESAA). The span at 427 to 442 (ANTGTASGDNSTASGD) shows a compositional bias: polar residues. A compositionally biased stretch (low complexity) spans 443 to 504 (NATASGTNST…ANGTNSTASG (62 aa)). Residues 505-519 (DNSTASGTNASATGE) show a composition bias toward polar residues. Low complexity predominate over residues 520 to 588 (NSTATGTDST…ANGTNSTASG (69 aa)). Residues 589–603 (DNSTASGTNASATGE) are compositionally biased toward polar residues. Residues 604 to 630 (NSTATGTDSTASGSNSTANGTNSTASG) show a composition bias toward low complexity. The segment covering 631-645 (DNSTASGTNASATGE) has biased composition (polar residues). Low complexity predominate over residues 646–672 (NSTATGTDSTASGSNSTANGTNSTASG). Positions 673 to 687 (DNSTASGTNASATGE) are enriched in polar residues. Residues 688-714 (NSTATGTDSTASGSNSTANGTNSTASG) are compositionally biased toward low complexity. Positions 715-729 (DNSTASGTNASATGE) are enriched in polar residues. Residues 730–756 (NSTATGTDSTASGSNSTANGANSTASG) show a composition bias toward low complexity. Residues 757–771 (DNSTASGTNASATGE) show a composition bias toward polar residues. Low complexity-rich tracts occupy residues 772 to 840 (NSTA…TASG) and 848 to 886 (TNASATGENSTATGTASTASGSNSTANGANSTASGAGAT). Residues 1062-1099 (IRNQMDGMQGQIDTLARDAYSGIAAATALTMIPDVDPG) are outer membrane translocation of the passenger domain. Residues 1100 to 1152 (KTLAVGIGTANFKGYQASALGATARITQNLKVKTGVSYSGSNYVWGAGMSYQW) are translocator domain.

It belongs to the autotransporter-2 (AT-2) (TC 1.B.40) family. As to quaternary structure, homotrimer.

It localises to the cell surface. Its subcellular location is the cell outer membrane. Functionally, involved in virulence. Mediates adherence to human respiratory epithelial cells. The protein is Autotransporter adhesin BpaC of Burkholderia pseudomallei (strain 1026b).